A 335-amino-acid chain; its full sequence is Replication factor C subunit 4 (335 aa).

56-63 is a binding site for ATP; that stretch reads SGPPGTGK.

This sequence belongs to the activator 1 small subunits family. As to quaternary structure, heterotetramer of subunits RFC2, RFC3, RFC4 and RFC5 that can form a complex with RFC1. Expressed in roots, leaves, shoot apical meristem (SAM), flag leaves and panicles.

It is found in the nucleus. In terms of biological role, may be involved in DNA replication and thus regulate cell proliferation. In Oryza sativa subsp. japonica (Rice), this protein is Replication factor C subunit 4 (RFC4).